Reading from the N-terminus, the 317-residue chain is Testis-specific Y-encoded protein 1 (317 aa).

Disordered stretches follow at residues 1–39 (MSRPFASAPARGHRQGQEERERRSEEGGSVPGPRTFQVV) and 91–118 (DEEQEQRPSQELEEKTVEEQGQERPGGP). Composition is skewed to basic and acidic residues over residues 15 to 26 (QGQEERERRSEE) and 95 to 112 (EQRPSQELEEKTVEEQGQ).

Belongs to the nucleosome assembly protein (NAP) family. Post-translationally, phosphorylated. In terms of tissue distribution, testis. Probably in spermatogonia.

The protein resides in the cytoplasm. The protein localises to the nucleus. Its function is as follows. May be involved in sperm differentiation and proliferation. This chain is Testis-specific Y-encoded protein 1 (TSPY1), found in Bos taurus (Bovine).